Consider the following 325-residue polypeptide: uncharacterized protein (325 aa).

Catalysis depends on Tyr59, which acts as the Proton donor. His117 serves as a coordination point for substrate.

Belongs to the aldo/keto reductase family.

The protein localises to the cytoplasm. It is found in the nucleus. This is an uncharacterized protein from Schizosaccharomyces pombe (strain 972 / ATCC 24843) (Fission yeast).